Consider the following 602-residue polypeptide: Threonine--tRNA ligase (602 aa).

Residues 208 to 499 (DHRKLGIELK…LTEHCAGEFP (292 aa)) form a catalytic region. Cys-300, His-351, and His-476 together coordinate Zn(2+).

It belongs to the class-II aminoacyl-tRNA synthetase family. Homodimer. The cofactor is Zn(2+).

The protein localises to the cytoplasm. It carries out the reaction tRNA(Thr) + L-threonine + ATP = L-threonyl-tRNA(Thr) + AMP + diphosphate + H(+). In terms of biological role, catalyzes the attachment of threonine to tRNA(Thr) in a two-step reaction: L-threonine is first activated by ATP to form Thr-AMP and then transferred to the acceptor end of tRNA(Thr). Also edits incorrectly charged L-seryl-tRNA(Thr). The chain is Threonine--tRNA ligase from Campylobacter jejuni subsp. doylei (strain ATCC BAA-1458 / RM4099 / 269.97).